Consider the following 437-residue polypeptide: Rhoptry apical surface protein 2 (437 aa).

In terms of domain architecture, C2 spans 45–179 (GCLGSLFFYL…PRINLSLHKL (135 aa)). The 109-residue stretch at 230 to 338 (EGPLERLNAN…FIEKLRAYRE (109 aa)) folds into the PH domain. Residues 341–437 (STRVPSQKGA…SVVGDEEPQT (97 aa)) form a disordered region. Residues 375–384 (RKSGGKKSRR) show a composition bias toward basic residues.

In terms of assembly, interacts with RASP1. Interacts with RASP3.

It localises to the cytoplasmic vesicle. The protein resides in the secretory vesicle. The protein localises to the rhoptry membrane. Essential for tachyzoite invasion of host cells by controlling rhoptry secretion. Binds to phosphatidic acid (PA) and phosphatidylinositol 4,5-bisphosphate (PIP2) lipids and thus, likely contributes to the assembly of the machinery that docks or primes the rhoptry to the parasite cell membrane prior to the fusion with the host cell membrane. The protein is Rhoptry apical surface protein 2 of Toxoplasma gondii (strain ATCC 50853 / GT1).